We begin with the raw amino-acid sequence, 107 residues long: Theromyzin (107 aa).

A signal peptide spans 1–21 (MHAKIILALFLGMTAFLAVQA).

In terms of tissue distribution, coelomic liquid (at protein level). Expressed in large fat cells in contact with coelomic cavities, in intestinal epithelia and at the epidermis level.

Its subcellular location is the secreted. Its function is as follows. Has bacteriostatic activity against M.luteus. No activity toward E.coli and F.oxysporum. The sequence is that of Theromyzin from Theromyzon tessulatum (Duck leech).